We begin with the raw amino-acid sequence, 142 residues long: FAD synthase (142 aa).

Residues 9 to 10 (VF), 14 to 17 (HLGH), D93, and Y120 each bind ATP.

The protein belongs to the archaeal FAD synthase family. In terms of assembly, homodimer. A divalent metal cation serves as cofactor.

It carries out the reaction FMN + ATP + H(+) = FAD + diphosphate. It functions in the pathway cofactor biosynthesis; FAD biosynthesis; FAD from FMN: step 1/1. Functionally, catalyzes the transfer of the AMP portion of ATP to flavin mononucleotide (FMN) to produce flavin adenine dinucleotide (FAD) coenzyme. The protein is FAD synthase (ribL) of Thermoplasma volcanium (strain ATCC 51530 / DSM 4299 / JCM 9571 / NBRC 15438 / GSS1).